The following is a 476-amino-acid chain: Inner membrane transporter YcaM (476 aa).

Residues 1–9 (MAGNVQEKQ) lie on the Cytoplasmic side of the membrane. The helical transmembrane segment at 10–30 (LRWYNIALMSFITVWGFGNVV) threads the bilayer. Over 31 to 38 (NNYANQGL) the chain is Periplasmic. The helical transmembrane segment at 39–59 (VVVFSWVFIFALYFTPYALIV) threads the bilayer. Over 60–80 (GQLGSTFKDGKGGVSTWIKHT) the chain is Cytoplasmic. Residues 81 to 101 (MGPGLAYLAAWTYWVVHIPYL) form a helical membrane-spanning segment. At 102–125 (AQKPQAILIALGWAMKGDGSLIKE) the chain is on the periplasmic side. The chain crosses the membrane as a helical span at residues 126–146 (YSVVALQGLTLVLFIFFMWVA). At 147 to 154 (SRGMKSLK) the chain is on the cytoplasmic side. The chain crosses the membrane as a helical span at residues 155–175 (IVGSVAGIAMFVMSLLYVAMA). At 176 to 195 (VTAPAITEVHIATTNITWET) the chain is on the periplasmic side. Residues 196–216 (FIPHIDFTYITTISMLVFAVG) form a helical membrane-spanning segment. Residues 217-240 (GAEKISPYVNQTRNPGKEFPKGML) are Cytoplasmic-facing. A helical membrane pass occupies residues 241–261 (CLAVMVAVCAILGSLAMGMMF). At 262–291 (DSRNIPDDLMTNGQYYAFQKLGEYYNMGNT) the chain is on the periplasmic side. Residues 292–312 (LMVIYAIANTLGQVAALVFSI) form a helical membrane-spanning segment. Topologically, residues 313 to 343 (DAPLKVLLGDADSKYIPASLCRTNASGTPVN) are cytoplasmic. Residues 344-364 (GYFLTLVLVAILIMLPTLGIG) traverse the membrane as a helical segment. Residues 365-375 (DMNNLYKWLLN) are Periplasmic-facing. Residues 376–396 (LNSVVMPLRYLWVFVAFIAVV) form a helical membrane-spanning segment. Topologically, residues 397–414 (RLAQKYKPEYVFIRNKPL) are cytoplasmic. The chain crosses the membrane as a helical span at residues 415–435 (AMTVGIWCFAFTAFACLTGIF). The Periplasmic portion of the chain corresponds to 436–448 (PKMEAFTAEWTFQ). The helical transmembrane segment at 449-469 (LALNVATPFVLVGLGLIFPLL) threads the bilayer. The Cytoplasmic segment spans residues 470-476 (ARKANSK).

It belongs to the amino acid-polyamine-organocation (APC) superfamily.

The protein localises to the cell inner membrane. This Escherichia coli (strain K12) protein is Inner membrane transporter YcaM (ycaM).